Here is a 249-residue protein sequence, read N- to C-terminus: Triosephosphate isomerase (249 aa).

9–11 provides a ligand contact to substrate; it reads NWK. His-94 (electrophile) is an active-site residue. Glu-166 acts as the Proton acceptor in catalysis. Substrate-binding positions include Gly-172, Ser-211, and 232–233; that span reads GG.

It belongs to the triosephosphate isomerase family. As to quaternary structure, homodimer.

It localises to the cytoplasm. The enzyme catalyses D-glyceraldehyde 3-phosphate = dihydroxyacetone phosphate. Its pathway is carbohydrate biosynthesis; gluconeogenesis. It functions in the pathway carbohydrate degradation; glycolysis; D-glyceraldehyde 3-phosphate from glycerone phosphate: step 1/1. Involved in the gluconeogenesis. Catalyzes stereospecifically the conversion of dihydroxyacetone phosphate (DHAP) to D-glyceraldehyde-3-phosphate (G3P). This chain is Triosephosphate isomerase, found in Moorella thermoacetica (strain ATCC 39073 / JCM 9320).